The chain runs to 227 residues: MTVQIITIDGPSGSGKGTLAAKLANHYGFHLLDSGALYRLLGLSLHHKNLLDDLDTCLSECVEAAIQINIKFETKNDSTIILLDGEDVTQTIRTERVGEFASKVAAVPELRTALFERQRAFIQLPGLVADGRDMATAIFPEAQAKIYLTASAESRAERRVKQLQGMGLDVKISDILANIQSRDKRDMERTVAPLRPAVDAYQIDSSNLSIDEVFQLMVNYVDQCIKA.

10–18 (GPSGSGKGT) provides a ligand contact to ATP.

It belongs to the cytidylate kinase family. Type 1 subfamily.

It localises to the cytoplasm. It carries out the reaction CMP + ATP = CDP + ADP. The enzyme catalyses dCMP + ATP = dCDP + ADP. The sequence is that of Cytidylate kinase from Acinetobacter baylyi (strain ATCC 33305 / BD413 / ADP1).